A 95-amino-acid polypeptide reads, in one-letter code: Co-chaperonin GroES (95 aa).

A disordered region spans residues 20 to 45; sequence KTKGGLIIPDSAKEKPAEGEITSVGE.

This sequence belongs to the GroES chaperonin family. As to quaternary structure, heptamer of 7 subunits arranged in a ring. Interacts with the chaperonin GroEL.

The protein localises to the cytoplasm. Together with the chaperonin GroEL, plays an essential role in assisting protein folding. The GroEL-GroES system forms a nano-cage that allows encapsulation of the non-native substrate proteins and provides a physical environment optimized to promote and accelerate protein folding. GroES binds to the apical surface of the GroEL ring, thereby capping the opening of the GroEL channel. This is Co-chaperonin GroES from Paracoccus denitrificans.